The sequence spans 119 residues: UPF0344 protein lp_1373 (119 aa).

4 helical membrane-spanning segments follow: residues 1–21, 32–52, 60–80, and 92–112; these read MYLL…AIGL, FLIL…ALAI, WLTL…EVAF, and LVTL…GLHW.

It belongs to the UPF0344 family.

The protein localises to the cell membrane. The protein is UPF0344 protein lp_1373 of Lactiplantibacillus plantarum (strain ATCC BAA-793 / NCIMB 8826 / WCFS1) (Lactobacillus plantarum).